The chain runs to 489 residues: MASISSLGAGSGMDLGSLLDKLQAAEKKRLEPLAQQQTSYKAKLTGFGTLKGSLEKLKSASEELKKFDKLNTTKTNGDHKTFTPSTDSKASPGNYEIEVQQLAKAQSLQSTEVSGVKKLLGEQGKGTRTIIITQPGEKEPMKISLKDDETSLVEIRDAINKKEGNVNASIIKADENGTEEEGKSYLILTSKKAGTRSIMTIKVEGDDELGKLLNYTSDGKGGGSGAMTQKVGAANAKLTVNGIPIERQTNEIKDAPEGIILNLKKVSETEEVIVKVNGEDKKIPRPKTEILVVSRDIEPMKEAIKKWVDSYNELQTTFDSLAKFKPVGKGEAASKDNGALLGDGTLKGIQSQLRHQLFAAQDVADIATLNKLGIKQKLDGTLEISDEKLEKNLKEKSADVKAFFMGDGAKPGSTQTYNLLKETLDGHEGTIATATEGINKRLKTLERQVEQTNRNIDATMERYKRQFTELDKLVNSLNNTSSSLFQLLR.

The span at 70 to 81 (LNTTKTNGDHKT) shows a compositional bias: basic and acidic residues. The disordered stretch occupies residues 70–92 (LNTTKTNGDHKTFTPSTDSKASP). Residues 82–91 (FTPSTDSKAS) show a composition bias toward polar residues. A coiled-coil region spans residues 430–480 (TIATATEGINKRLKTLERQVEQTNRNIDATMERYKRQFTELDKLVNSLNNT).

The protein belongs to the FliD family. As to quaternary structure, homopentamer.

The protein resides in the secreted. It is found in the bacterial flagellum. In terms of biological role, required for the morphogenesis and for the elongation of the flagellar filament by facilitating polymerization of the flagellin monomers at the tip of growing filament. Forms a capping structure, which prevents flagellin subunits (transported through the central channel of the flagellum) from leaking out without polymerization at the distal end. This chain is Flagellar hook-associated protein 2 (fliD), found in Xenorhabdus nematophila (Achromobacter nematophilus).